A 121-amino-acid polypeptide reads, in one-letter code: Large ribosomal subunit protein uL14 (121 aa).

It belongs to the universal ribosomal protein uL14 family. As to quaternary structure, part of the 50S ribosomal subunit. Forms a cluster with proteins L3 and L19. In the 70S ribosome, L14 and L19 interact and together make contacts with the 16S rRNA in bridges B5 and B8.

Binds to 23S rRNA. Forms part of two intersubunit bridges in the 70S ribosome. The chain is Large ribosomal subunit protein uL14 from Synechococcus sp. (strain RCC307).